The sequence spans 228 residues: 2-C-methyl-D-erythritol 4-phosphate cytidylyltransferase (228 aa).

This sequence belongs to the IspD/TarI cytidylyltransferase family. IspD subfamily.

It carries out the reaction 2-C-methyl-D-erythritol 4-phosphate + CTP + H(+) = 4-CDP-2-C-methyl-D-erythritol + diphosphate. Its pathway is isoprenoid biosynthesis; isopentenyl diphosphate biosynthesis via DXP pathway; isopentenyl diphosphate from 1-deoxy-D-xylulose 5-phosphate: step 2/6. Its function is as follows. Catalyzes the formation of 4-diphosphocytidyl-2-C-methyl-D-erythritol from CTP and 2-C-methyl-D-erythritol 4-phosphate (MEP). In Actinobacillus pleuropneumoniae serotype 5b (strain L20), this protein is 2-C-methyl-D-erythritol 4-phosphate cytidylyltransferase.